Reading from the N-terminus, the 450-residue chain is Keratin, type I cytoskeletal 25 (450 aa).

The tract at residues M1–S24 is disordered. The head stretch occupies residues M1–N78. The interval E79–W114 is coil 1A. An IF rod domain is found at E79–C394. Residues Y115 to I136 form a linker 1 region. The tract at residues I137–L228 is coil 1B. Positions Q229 to L251 are linker 12. The interval L252–D390 is coil 2. A tail region spans residues D391–N450. Position 442 is a phosphoserine (S442).

It belongs to the intermediate filament family. Heterodimer of a type I and a type II keratin. Heterodimer with type II keratin KRT5 leading to the formation of keratin intermediate filament (KIF) network. Interacts with KRT6A to form filaments.

The protein localises to the cytoplasm. Functionally, essential for the proper assembly of type I and type II keratin protein complexes and formation of keratin intermediate filaments in the inner root sheath (irs). Plays a role in the cytoskeleton organization. The chain is Keratin, type I cytoskeletal 25 from Capra hircus (Goat).